A 133-amino-acid polypeptide reads, in one-letter code: Transcription antitermination protein NusB (133 aa).

The protein belongs to the NusB family.

Functionally, involved in transcription antitermination. Required for transcription of ribosomal RNA (rRNA) genes. Binds specifically to the boxA antiterminator sequence of the ribosomal RNA (rrn) operons. The polypeptide is Transcription antitermination protein NusB (Shewanella denitrificans (strain OS217 / ATCC BAA-1090 / DSM 15013)).